The sequence spans 262 residues: 14-3-3-like protein B (262 aa).

This sequence belongs to the 14-3-3 family.

In Hordeum vulgare (Barley), this protein is 14-3-3-like protein B.